Reading from the N-terminus, the 1909-residue chain is NFX1-type zinc finger-containing protein 1 (1909 aa).

2 stretches are compositionally biased toward basic and acidic residues: residues 1 to 12 (MEDRRPHLEARP) and 76 to 107 (RNQE…EGRS). 2 disordered regions span residues 1–133 (MEDR…QPQQ) and 787–813 (TQSA…EEEG). Polar residues predominate over residues 113-122 (SSDTFQQWHT). Residues 802–813 (EGEEEEEGEEEG) show a composition bias toward acidic residues. Residues 939-964 (RRRILSYERQYRTWAERMAELRLQED) adopt a coiled-coil conformation. 4 NF-X1-type zinc fingers span residues 1291–1313 (CGHV…QCMK), 1375–1393 (CGHR…LCSE), 1433–1455 (CGHP…RCQQ), and 1463–1480 (CSHK…PCQR). Residues 1733-1764 (LAKKRLSFSSQELSDLQSEIQRLTYLVNLLMR) are a coiled coil. The RZ-type zinc finger occupies 1818–1889 (ISDEERVQIV…LASEMDGAQH (72 aa)). Zn(2+)-binding residues include C1840, H1844, C1860, and C1863.

Belongs to the ZNFX1 family. Interacts with MAVS.

It is found in the mitochondrion outer membrane. It localises to the cytoplasm. The protein localises to the stress granule. In terms of biological role, RNA-binding protein that initiates the antiviral response and is required to restrict the replication of RNA viruses. Acts as a double-stranded RNA (dsRNA) sensor that recognizes viral RNA and then interacts with MAVS to initiate the type I interferon response. Also required for immunity against some bacteria, such as mycobacteria. In Mus musculus (Mouse), this protein is NFX1-type zinc finger-containing protein 1.